Consider the following 469-residue polypeptide: Glutamine synthetase (469 aa).

One can recognise a GS beta-grasp domain in the interval 14–99 (NDVKFVDLRF…FCDILDPVSG (86 aa)). The GS catalytic domain occupies 106–469 (PRGTAKKAEA…PVEFDMYYSV (364 aa)). Positions 131 and 133 each coordinate Mg(2+). E209 is an ATP binding site. Mg(2+) is bound by residues E214 and E221. L-glutamate-binding positions include 265–266 (NG) and G266. A Mg(2+)-binding site is contributed by H270. ATP is bound by residues 272–274 (HLS) and S274. L-glutamate contacts are provided by R322, E328, and R340. ATP contacts are provided by R340, R345, and K353. Residue E358 coordinates Mg(2+). R360 is an L-glutamate binding site. Y398 carries the post-translational modification O-AMP-tyrosine.

Belongs to the glutamine synthetase family. Oligomer of 12 subunits arranged in the form of two hexameric ring. It depends on Mg(2+) as a cofactor.

The protein localises to the cytoplasm. The enzyme catalyses L-glutamate + NH4(+) + ATP = L-glutamine + ADP + phosphate + H(+). With respect to regulation, the activity of this enzyme could be controlled by adenylation under conditions of abundant glutamine. Its function is as follows. Catalyzes the ATP-dependent biosynthesis of glutamine from glutamate and ammonia. This Rhizobium meliloti (strain 1021) (Ensifer meliloti) protein is Glutamine synthetase.